The following is a 439-amino-acid chain: Xylose isomerase (439 aa).

Catalysis depends on residues His100 and Asp103. Positions 231, 267, 270, 295, 306, 308, and 338 each coordinate Mg(2+).

The protein belongs to the xylose isomerase family. As to quaternary structure, homotetramer. Mg(2+) is required as a cofactor.

The protein resides in the cytoplasm. The enzyme catalyses alpha-D-xylose = alpha-D-xylulofuranose. This Rhodopirellula baltica (strain DSM 10527 / NCIMB 13988 / SH1) protein is Xylose isomerase.